We begin with the raw amino-acid sequence, 1060 residues long: Valine--tRNA ligase, mitochondrial (1060 aa).

The transit peptide at 1–15 (MPHLPLASFRPPLWG) directs the protein to the mitochondrion. The disordered stretch occupies residues 25–50 (PQALCTQPEPHGSPVSRRNREAKQKR). The 'HIGH' region motif lies at 146–156 (PNVTGSLHIGH). K548 carries the post-translational modification N6-acetyllysine. Residues 659-663 (KMSKS) carry the 'KMSKS' region motif. K662 serves as a coordination point for ATP.

The protein belongs to the class-I aminoacyl-tRNA synthetase family.

The protein resides in the mitochondrion. The enzyme catalyses tRNA(Val) + L-valine + ATP = L-valyl-tRNA(Val) + AMP + diphosphate. In terms of biological role, catalyzes the attachment of valine to tRNA(Val) in a two-step reaction: valine is first activated by ATP to form Val-AMP and then transferred to the acceptor end of tRNA(Val). The sequence is that of Valine--tRNA ligase, mitochondrial (Vars2) from Mus musculus (Mouse).